An 879-amino-acid chain; its full sequence is Metabotropic glutamate receptor 3 (879 aa).

The N-terminal stretch at 1 to 22 is a signal peptide; sequence MKMLTRLQILMLALFSKGFLLS. Over 23–576 the chain is Extracellular; that stretch reads LGDHNFMRRE…EDYIKWEDAW (554 aa). Cysteine 57 and cysteine 99 are joined by a disulfide. L-glutamate is bound by residues arginine 68, serine 151, and 172 to 174; that span reads AST. An N-linked (GlcNAc...) asparagine glycan is attached at asparagine 209. Tyrosine 222 lines the L-glutamate pocket. 7 disulfides stabilise this stretch: cysteine 240–cysteine 527, cysteine 361–cysteine 373, cysteine 412–cysteine 419, cysteine 509–cysteine 528, cysteine 513–cysteine 531, cysteine 534–cysteine 546, and cysteine 549–cysteine 562. A glycan (N-linked (GlcNAc...) asparagine) is linked at asparagine 292. Aspartate 301 lines the L-glutamate pocket. Lysine 389 contributes to the L-glutamate binding site. N-linked (GlcNAc...) asparagine glycans are attached at residues asparagine 414 and asparagine 439. The helical transmembrane segment at 577–599 threads the bilayer; sequence AIGPVTIACLGFLCTCIVITVFI. Over 600–613 the chain is Cytoplasmic; the sequence is KHNNTPLVKASGRE. The helical transmembrane segment at 614 to 634 threads the bilayer; sequence LCYILLFGVSLSYCMTFFFIA. Residues 635–645 lie on the Extracellular side of the membrane; sequence KPSPVICALRR. The chain crosses the membrane as a helical span at residues 646-664; sequence LGLGTSFAICYSALLTKTN. The Cytoplasmic portion of the chain corresponds to 665 to 688; that stretch reads CIARIFDGVKNGAQRPKFISPSSQ. A helical membrane pass occupies residues 689 to 709; the sequence is VFICLGLILVQIVMVSVWLIL. Residues 710-734 are Extracellular-facing; it reads ETPGTRRYTLPEKRETVILKCNVKD. A helical membrane pass occupies residues 735-756; that stretch reads SSMLISLTYDVVLVILCTVYAF. Topologically, residues 757 to 769 are cytoplasmic; it reads KTRKCPENFNEAK. Residues 770-792 traverse the membrane as a helical segment; sequence FIGFTMYTTCIIWLAFLPIFYVT. The Extracellular segment spans residues 793–802; that stretch reads SSDYRVQTTT. A helical membrane pass occupies residues 803-828; the sequence is MCISVSLSGFVVLGCLFAPKVHIVLF. Residues 829–879 lie on the Cytoplasmic side of the membrane; sequence QPQKNVVTHRLHLNRFSVSGTATTYSQSSASTYVPTVCNGREVLDSTTSSL.

The protein belongs to the G-protein coupled receptor 3 family. In terms of assembly, interacts with TAMALIN. As to expression, is widely distributed in the CNS. Predominant expression is seen in the neuronal cells of the cerebral cortex, dentate gyrus, and glial cells throughout brain regions.

The protein localises to the cell membrane. Functionally, G-protein coupled receptor for glutamate. Ligand binding causes a conformation change that triggers signaling via guanine nucleotide-binding proteins (G proteins) and modulates the activity of down-stream effectors. Signaling inhibits adenylate cyclase activity. This chain is Metabotropic glutamate receptor 3 (Grm3), found in Rattus norvegicus (Rat).